The chain runs to 92 residues: MNKKQRDAKNKKRFQQQNPLFKRKKFCRFTVAGVEQIDYKDLDTLKDFIGENGKITPARLTGTRSHYQRQLDTAIKRARFLALMPYTDQHKH.

This sequence belongs to the bacterial ribosomal protein bS18 family. Part of the 30S ribosomal subunit. Forms a tight heterodimer with protein bS6.

Its function is as follows. Binds as a heterodimer with protein bS6 to the central domain of the 16S rRNA, where it helps stabilize the platform of the 30S subunit. The chain is Small ribosomal subunit protein bS18 from Ralstonia nicotianae (strain ATCC BAA-1114 / GMI1000) (Ralstonia solanacearum).